The chain runs to 101 residues: Apolipoprotein C-II (101 aa).

The first 22 residues, 1-22 (MGTRFLLALCLVLLVLGFEVQG), serve as a signal peptide directing secretion. Positions 66–74 (AVDEKLRDL) are lipid binding. Residues 78 to 101 (STAAMSTYTGIFTDQVLSVLKGEE) are lipoprotein lipase cofactor.

It belongs to the apolipoprotein C2 family. Post-translationally, proapolipoprotein C-II is synthesized as a sialic acid containing glycoprotein which is subsequently desialylated prior to its proteolytic processing. In terms of processing, proapolipoprotein C-II, the major form found in plasma undergoes proteolytic cleavage of its N-terminal hexapeptide to generate apolipoprotein C-II, which occurs as the minor form in plasma.

The protein resides in the secreted. Its function is as follows. Component of chylomicrons, very low-density lipoproteins (VLDL), low-density lipoproteins (LDL), and high-density lipoproteins (HDL) in plasma. Plays an important role in lipoprotein metabolism as an activator of lipoprotein lipase. Both proapolipoprotein C-II and apolipoprotein C-II can activate lipoprotein lipase. The protein is Apolipoprotein C-II (APOC2) of Colobus guereza (Mantled guereza).